A 284-amino-acid polypeptide reads, in one-letter code: 2,3,4,5-tetrahydropyridine-2,6-dicarboxylate N-succinyltransferase (284 aa).

Residues R111 and D148 each coordinate substrate.

Belongs to the transferase hexapeptide repeat family. As to quaternary structure, homotrimer.

The protein localises to the cytoplasm. It catalyses the reaction (S)-2,3,4,5-tetrahydrodipicolinate + succinyl-CoA + H2O = (S)-2-succinylamino-6-oxoheptanedioate + CoA. The protein operates within amino-acid biosynthesis; L-lysine biosynthesis via DAP pathway; LL-2,6-diaminopimelate from (S)-tetrahydrodipicolinate (succinylase route): step 1/3. The sequence is that of 2,3,4,5-tetrahydropyridine-2,6-dicarboxylate N-succinyltransferase from Chelativorans sp. (strain BNC1).